A 179-amino-acid chain; its full sequence is uncharacterized protein (179 aa).

This is an uncharacterized protein from Salmonella typhimurium (strain LT2 / SGSC1412 / ATCC 700720).